The chain runs to 63 residues: MLGQSIRRFTTSVVRRSHYEEGPGKNLPFSVENKWRLLAMMTLYFGSGFAAPFFIVRHQLLKK.

A mitochondrion-targeting transit peptide spans 1–16 (MLGQSIRRFTTSVVRR). At 17-33 (SHYEEGPGKNLPFSVEN) the chain is on the mitochondrial matrix side. Residue K25 is modified to N6-acetyllysine; alternate. K25 is subject to N6-succinyllysine; alternate. A helical membrane pass occupies residues 34-60 (KWRLLAMMTLYFGSGFAAPFFIVRHQL). The Mitochondrial intermembrane segment spans residues 61-63 (LKK).

The protein belongs to the cytochrome c oxidase VIIc family. Component of the cytochrome c oxidase (complex IV, CIV), a multisubunit enzyme composed of 14 subunits. The complex is composed of a catalytic core of 3 subunits MT-CO1, MT-CO2 and MT-CO3, encoded in the mitochondrial DNA, and 11 supernumerary subunits COX4I, COX5A, COX5B, COX6A, COX6B, COX6C, COX7A, COX7B, COX7C, COX8 and NDUFA4, which are encoded in the nuclear genome. The complex exists as a monomer or a dimer and forms supercomplexes (SCs) in the inner mitochondrial membrane with NADH-ubiquinone oxidoreductase (complex I, CI) and ubiquinol-cytochrome c oxidoreductase (cytochrome b-c1 complex, complex III, CIII), resulting in different assemblies (supercomplex SCI(1)III(2)IV(1) and megacomplex MCI(2)III(2)IV(2)). Interacts with RAB5IF.

The protein resides in the mitochondrion inner membrane. It participates in energy metabolism; oxidative phosphorylation. Its function is as follows. Component of the cytochrome c oxidase, the last enzyme in the mitochondrial electron transport chain which drives oxidative phosphorylation. The respiratory chain contains 3 multisubunit complexes succinate dehydrogenase (complex II, CII), ubiquinol-cytochrome c oxidoreductase (cytochrome b-c1 complex, complex III, CIII) and cytochrome c oxidase (complex IV, CIV), that cooperate to transfer electrons derived from NADH and succinate to molecular oxygen, creating an electrochemical gradient over the inner membrane that drives transmembrane transport and the ATP synthase. Cytochrome c oxidase is the component of the respiratory chain that catalyzes the reduction of oxygen to water. Electrons originating from reduced cytochrome c in the intermembrane space (IMS) are transferred via the dinuclear copper A center (CU(A)) of subunit 2 and heme A of subunit 1 to the active site in subunit 1, a binuclear center (BNC) formed by heme A3 and copper B (CU(B)). The BNC reduces molecular oxygen to 2 water molecules using 4 electrons from cytochrome c in the IMS and 4 protons from the mitochondrial matrix. The protein is Cytochrome c oxidase subunit 7C, mitochondrial (COX7C) of Sus scrofa (Pig).